A 283-amino-acid polypeptide reads, in one-letter code: Glutamyl-Q tRNA(Asp) synthetase (283 aa).

L-glutamate is bound by residues 5–9 (RFAPT) and Glu41. A 'HIGH' region motif is present at residues 8–18 (PTPSGPLHLGS). Zn(2+)-binding residues include Cys97, Cys99, Tyr111, and Cys115. 2 residues coordinate L-glutamate: Tyr168 and Arg186. Positions 224 to 228 (KLSKQ) match the 'KMSKS' region motif. Residue Lys227 coordinates ATP.

This sequence belongs to the class-I aminoacyl-tRNA synthetase family. GluQ subfamily. Requires Zn(2+) as cofactor.

Functionally, catalyzes the tRNA-independent activation of glutamate in presence of ATP and the subsequent transfer of glutamate onto a tRNA(Asp). Glutamate is transferred on the 2-amino-5-(4,5-dihydroxy-2-cyclopenten-1-yl) moiety of the queuosine in the wobble position of the QUC anticodon. The protein is Glutamyl-Q tRNA(Asp) synthetase of Idiomarina loihiensis (strain ATCC BAA-735 / DSM 15497 / L2-TR).